The chain runs to 418 residues: Beta-arrestin-1 (418 aa).

The tract at residues 1–163 is interaction with SRC; it reads MGDKGTRVFK…LEEKIHKRNS (163 aa). The interaction with CHRM2 stretch occupies residues 45–86; that stretch reads PEYLKERRVYVTLTCAFRYGREDLDVLGLTFRKDLFVANVQS. At Tyr47 the chain carries Phosphotyrosine. 4 residues coordinate 1D-myo-inositol hexakisphosphate: Lys250, Met255, Lys324, and Lys326. Residues 318-418 form an interaction with TRAF6 region; sequence IVSYKVKVKL…GTGSPHLNNR (101 aa). Disordered stretches follow at residues 353-375 and 397-418; these read HPKP…VDTN and KGMK…LNNR. Residues 355–366 are compositionally biased toward basic and acidic residues; it reads KPKEEPPHREVP. Ser412 is modified (phosphoserine).

Belongs to the arrestin family. As to quaternary structure, monomer. Homodimer. Homooligomer; the self-association is mediated by InsP6-binding. Heterooligomer with ARRB2; the association is mediated by InsP6-binding. Interacts with ADRB2 (phosphorylated). Interacts with CHRM2 (phosphorylated). Interacts with LHCGR. Interacts with CYTH2 and CASR. Interacts with AP2B1 (dephosphorylated); phosphorylation of AP2B1 disrupts the interaction. Interacts (dephosphorylated at Ser-412) with CLTC. Interacts with CCR2 and GRK2. Interacts with CRR5. Interacts with PTAFR (phosphorylated on serine residues). Interacts with CLTC and MAP2K3. Interacts with CREB1. Interacts with TRAF6. Interacts with IGF1R and MDM2. Interacts with C5AR1. Interacts with PDE4D. Interacts with SRC (via the SH3 domain and the protein kinase domain); the interaction is independent of the phosphorylation state of SRC C-terminus. Interacts with TACR1. Interacts with RAF1. Interacts with DVL1; the interaction is enhanced by phosphorylation of DVL1. Interacts with DVL2; the interaction is enhanced by phosphorylation of DVL2. Interacts with IGF1R. Interacts with CHUK, IKBKB and MAP3K14. Associates with MAP kinase p38. Part of a MAPK signaling complex consisting of TACR1, ARRB1, SRC, MAPK1 (activated) and MAPK3 (activated). Part of a MAPK signaling complex consisting of F2RL1, ARRB1, RAF1, MAPK1 (activated) and MAPK3 (activated). Interacts with GPR143. Interacts with MAP2K4/MKK4. Interacts with HCK and CXCR1 (phosphorylated). Interacts with ACKR3 and ACKR4. Interacts with ARRDC1; the interaction is direct. Interacts with GPR61, GPR62 and GPR135. Post-translationally, constitutively phosphorylated at in the cytoplasm. At the plasma membrane, is rapidly dephosphorylated, a process that is required for clathrin binding and ADRB2 endocytosis but not for ADRB2 binding and desensitization. Once internalized, is rephosphorylated. In terms of processing, the ubiquitination status appears to regulate the formation and trafficking of beta-arrestin-GPCR complexes and signaling. Ubiquitination appears to occur GPCR-specific. Ubiquitinated by MDM2; the ubiquitination is required for rapid internalization of ADRB2. Deubiquitinated by USP33; the deubiquitination leads to a dissociation of the beta-arrestin-GPCR complex. Stimulation of a class A GPCR, such as ADRB2, induces transient ubiquitination and subsequently promotes association with USP33.

Its subcellular location is the cytoplasm. The protein resides in the nucleus. It localises to the cell membrane. The protein localises to the membrane. It is found in the clathrin-coated pit. Its subcellular location is the cell projection. The protein resides in the pseudopodium. It localises to the cytoplasmic vesicle. Functionally, functions in regulating agonist-mediated G-protein coupled receptor (GPCR) signaling by mediating both receptor desensitization and resensitization processes. During homologous desensitization, beta-arrestins bind to the GPRK-phosphorylated receptor and sterically preclude its coupling to the cognate G-protein; the binding appears to require additional receptor determinants exposed only in the active receptor conformation. The beta-arrestins target many receptors for internalization by acting as endocytic adapters (CLASPs, clathrin-associated sorting proteins) and recruiting the GPRCs to the adapter protein 2 complex 2 (AP-2) in clathrin-coated pits (CCPs). However, the extent of beta-arrestin involvement appears to vary significantly depending on the receptor, agonist and cell type. Internalized arrestin-receptor complexes traffic to intracellular endosomes, where they remain uncoupled from G-proteins. Two different modes of arrestin-mediated internalization occur. Class A receptors, like ADRB2, OPRM1, ENDRA, D1AR and ADRA1B dissociate from beta-arrestin at or near the plasma membrane and undergo rapid recycling. Class B receptors, like AVPR2, AGTR1, NTSR1, TRHR and TACR1 internalize as a complex with arrestin and traffic with it to endosomal vesicles, presumably as desensitized receptors, for extended periods of time. Receptor resensitization then requires that receptor-bound arrestin is removed so that the receptor can be dephosphorylated and returned to the plasma membrane. Involved in internalization of P2RY4 and UTP-stimulated internalization of P2RY2. Involved in phosphorylation-dependent internalization of OPRD1 ands subsequent recycling. Involved in the degradation of cAMP by recruiting cAMP phosphodiesterases to ligand-activated receptors. Beta-arrestins function as multivalent adapter proteins that can switch the GPCR from a G-protein signaling mode that transmits short-lived signals from the plasma membrane via small molecule second messengers and ion channels to a beta-arrestin signaling mode that transmits a distinct set of signals that are initiated as the receptor internalizes and transits the intracellular compartment. Acts as a signaling scaffold for MAPK pathways such as MAPK1/3 (ERK1/2). ERK1/2 activated by the beta-arrestin scaffold is largely excluded from the nucleus and confined to cytoplasmic locations such as endocytic vesicles, also called beta-arrestin signalosomes. Recruits c-Src/SRC to ADRB2 resulting in ERK activation. GPCRs for which the beta-arrestin-mediated signaling relies on both ARRB1 and ARRB2 (codependent regulation) include ADRB2, F2RL1 and PTH1R. For some GPCRs the beta-arrestin-mediated signaling relies on either ARRB1 or ARRB2 and is inhibited by the other respective beta-arrestin form (reciprocal regulation). Inhibits ERK1/2 signaling in AGTR1- and AVPR2-mediated activation (reciprocal regulation). Is required for SP-stimulated endocytosis of NK1R and recruits c-Src/SRC to internalized NK1R resulting in ERK1/2 activation, which is required for the antiapoptotic effects of SP. Is involved in proteinase-activated F2RL1-mediated ERK activity. Acts as a signaling scaffold for the AKT1 pathway. Is involved in alpha-thrombin-stimulated AKT1 signaling. Is involved in IGF1-stimulated AKT1 signaling leading to increased protection from apoptosis. Involved in activation of the p38 MAPK signaling pathway and in actin bundle formation. Involved in F2RL1-mediated cytoskeletal rearrangement and chemotaxis. Involved in AGTR1-mediated stress fiber formation by acting together with GNAQ to activate RHOA. Appears to function as signaling scaffold involved in regulation of MIP-1-beta-stimulated CCR5-dependent chemotaxis. Involved in attenuation of NF-kappa-B-dependent transcription in response to GPCR or cytokine stimulation by interacting with and stabilizing CHUK. May serve as nuclear messenger for GPCRs. Involved in OPRD1-stimulated transcriptional regulation by translocating to CDKN1B and FOS promoter regions and recruiting EP300 resulting in acetylation of histone H4. Involved in regulation of LEF1 transcriptional activity via interaction with DVL1 and/or DVL2 Also involved in regulation of receptors other than GPCRs. Involved in Toll-like receptor and IL-1 receptor signaling through the interaction with TRAF6 which prevents TRAF6 autoubiquitination and oligomerization required for activation of NF-kappa-B and JUN. Involved in IL8-mediated granule release in neutrophils. Binds phosphoinositides. Binds inositolhexakisphosphate (InsP6). Required for atypical chemokine receptor ACKR2-induced RAC1-LIMK1-PAK1-dependent phosphorylation of cofilin (CFL1) and for the up-regulation of ACKR2 from endosomal compartment to cell membrane, increasing its efficiency in chemokine uptake and degradation. Involved in the internalization of the atypical chemokine receptor ACKR3. Negatively regulates the NOTCH signaling pathway by mediating the ubiquitination and degradation of NOTCH1 by ITCH. Participates in the recruitment of the ubiquitin-protein ligase to the receptor. In Mus musculus (Mouse), this protein is Beta-arrestin-1 (Arrb1).